The chain runs to 335 residues: Acetyl-coenzyme A carboxylase carboxyl transferase subunit alpha (335 aa).

Residues 48 to 308 (TLEKKVEALR…KGILIEELSA (261 aa)) enclose the CoA carboxyltransferase C-terminal domain.

The protein belongs to the AccA family. As to quaternary structure, acetyl-CoA carboxylase is a heterohexamer composed of biotin carboxyl carrier protein (AccB), biotin carboxylase (AccC) and two subunits each of ACCase subunit alpha (AccA) and ACCase subunit beta (AccD).

It is found in the cytoplasm. It catalyses the reaction N(6)-carboxybiotinyl-L-lysyl-[protein] + acetyl-CoA = N(6)-biotinyl-L-lysyl-[protein] + malonyl-CoA. Its pathway is lipid metabolism; malonyl-CoA biosynthesis; malonyl-CoA from acetyl-CoA: step 1/1. In terms of biological role, component of the acetyl coenzyme A carboxylase (ACC) complex. First, biotin carboxylase catalyzes the carboxylation of biotin on its carrier protein (BCCP) and then the CO(2) group is transferred by the carboxyltransferase to acetyl-CoA to form malonyl-CoA. This chain is Acetyl-coenzyme A carboxylase carboxyl transferase subunit alpha, found in Chlorobium phaeovibrioides (strain DSM 265 / 1930) (Prosthecochloris vibrioformis (strain DSM 265)).